We begin with the raw amino-acid sequence, 139 residues long: Peptide methionine sulfoxide reductase MsrB (139 aa).

The MsrB domain occupies 8-130 (EREWQRELSP…NSASLQLKTD (123 aa)). C47, C50, C96, and C99 together coordinate Zn(2+). C119 acts as the Nucleophile in catalysis.

The protein belongs to the MsrB Met sulfoxide reductase family. Zn(2+) is required as a cofactor.

It catalyses the reaction L-methionyl-[protein] + [thioredoxin]-disulfide + H2O = L-methionyl-(R)-S-oxide-[protein] + [thioredoxin]-dithiol. The sequence is that of Peptide methionine sulfoxide reductase MsrB from Acinetobacter baylyi (strain ATCC 33305 / BD413 / ADP1).